Reading from the N-terminus, the 788-residue chain is Cap-specific mRNA (nucleoside-2'-O-)-methyltransferase 1 (788 aa).

The G-patch domain maps to tyrosine 25 to aspartate 71. Residues lysine 143–aspartate 147 and arginine 158 each bind substrate. Residues isoleucine 171–arginine 384 enclose the RrmJ-type SAM-dependent 2'-O-MTase domain. Asparagine 174 lines the S-adenosyl-L-methionine pocket. Lysine 179 is a catalytic residue. Cysteine 215–phenylalanine 221 is an S-adenosyl-L-methionine binding site. The active site involves aspartate 298. Asparagine 308 to glutamine 310 lines the substrate pocket. Catalysis depends on lysine 338, which acts as the Proton acceptor. Residue asparagine 373 coordinates substrate.

As to quaternary structure, interacts (via C-terminus) with r2d2 (via C-terminus).

It is found in the nucleus. The protein localises to the cytoplasm. It catalyses the reaction a 5'-end (N(7)-methyl 5'-triphosphoguanosine)-ribonucleoside in mRNA + S-adenosyl-L-methionine = a 5'-end (N(7)-methyl 5'-triphosphoguanosine)-(2'-O-methyl-ribonucleoside) in mRNA + S-adenosyl-L-homocysteine + H(+). Functionally, S-adenosyl-L-methionine-dependent methyltransferase that mediates mRNA cap1 2'-O-ribose methylation to the 5'-cap structure of mRNAs. Methylates the ribose of the first nucleotide of a m(7)GpppG-capped mRNA to produce m(7)GpppNmp (cap1). Positively regulates the Ago2-dependent small RNA pathway, with roles in both siRNA biogenesis and RISC assembly. Involved in facilitating conversion of pre-RISC into holo-RISC, possibly by promoting the unwinding of Ago2-bound siRNA duplexes and thus the retention of the guide strand in holo-RISC. The chain is Cap-specific mRNA (nucleoside-2'-O-)-methyltransferase 1 from Drosophila melanogaster (Fruit fly).